Consider the following 719-residue polypeptide: Probable disease resistance protein At4g14610 (719 aa).

Residues 25-73 (SLPENLAALQKAIEVLKTKHDDVKRRVDKEEFLGRRHRLSQVQVEIERL) are a coiled coil. In terms of domain architecture, NB-ARC spans 114 to 418 (EENLVAQVEE…NELEKILGCP (305 aa)). 156 to 163 (GMGGVGKT) lines the ATP pocket. LRR repeat units follow at residues 400 to 421 (AVRRMSLMKNELEKILGCPTCP), 422 to 444 (QLTTLLLQKNHKLVNISGEFFRF), and 447 to 469 (NLVVLDLSWNSSLTGLPKKISEV).

The protein belongs to the disease resistance NB-LRR family.

Functionally, probable disease resistance protein. The polypeptide is Probable disease resistance protein At4g14610 (Arabidopsis thaliana (Mouse-ear cress)).